The primary structure comprises 320 residues: L-lactate dehydrogenase 2 (320 aa).

NAD(+)-binding positions include 18–19 (AV), Asp40, and Arg45. Residues Gln88, Arg94, and 126–129 (NPVD) each bind substrate. NAD(+) contacts are provided by residues 124–126 (ITN) and Ser149. 154–157 (DSAR) contacts substrate. Beta-D-fructose 1,6-bisphosphate contacts are provided by residues Arg159 and 171-176 (KNVHAY). Catalysis depends on His181, which acts as the Proton acceptor. Position 228 is a phosphotyrosine (Tyr228). Substrate is bound at residue Thr237.

It belongs to the LDH/MDH superfamily. LDH family. In terms of assembly, homotetramer.

It localises to the cytoplasm. It catalyses the reaction (S)-lactate + NAD(+) = pyruvate + NADH + H(+). It functions in the pathway fermentation; pyruvate fermentation to lactate; (S)-lactate from pyruvate: step 1/1. Allosterically activated by fructose 1,6-bisphosphate (FBP). In terms of biological role, catalyzes the conversion of lactate to pyruvate. The protein is L-lactate dehydrogenase 2 of Bifidobacterium longum subsp. longum (strain ATCC 15707 / DSM 20219 / JCM 1217 / NCTC 11818 / E194b).